Here is a 447-residue protein sequence, read N- to C-terminus: Oxysterols receptor LXR-alpha (447 aa).

A disordered region spans residues 1 to 88 (MSLWLEAPVP…LRPQKRKKGP (88 aa)). A transactivation AF-1; required for ligand-independent transactivation function region spans residues 1–96 (MSLWLEAPVP…GPAPKMLGNE (96 aa)). A DNA-binding region (nuclear receptor) is located at residues 95-170 (NELCSVCGDK…AGMREECVLS (76 aa)). 2 NR C4-type zinc fingers span residues 98 to 118 (CSVC…CEGC) and 134 to 158 (CHSG…LRKC). A disordered region spans residues 178–203 (KMKRQEEEQAQATSAPPRASSPPQVL). Residues 187-203 (AQATSAPPRASSPPQVL) are compositionally biased toward low complexity. Positions 205–447 (QLSPEQLGMI…LLSEIWDVHE (243 aa)) are transactivation AF-2; required for ligand-dependent transactivation function; mediates interaction with CCAR2. One can recognise an NR LBD domain in the interval 209-447 (EQLGMIEKLV…LLSEIWDVHE (239 aa)).

The protein belongs to the nuclear hormone receptor family. NR1 subfamily. As to quaternary structure, heterodimer of NR1H3 and RXR (retinoic acid receptor). Interacts with CCAR2 (via N-terminus) in a ligand-independent manner. Interacts with SIRT1 and this interaction is inhibited by CCAR2. In terms of processing, ubiquitinated by UBR5, leading to its degradation: UBR5 specifically recognizes and binds ligand-bound NR1H3 when it is not associated with coactivators (NCOAs). In presence of NCOAs, the UBR5-degron is not accessible, preventing its ubiquitination and degradation.

It localises to the nucleus. It is found in the cytoplasm. In terms of biological role, nuclear receptor that exhibits a ligand-dependent transcriptional activation activity. Interaction with retinoic acid receptor (RXR) shifts RXR from its role as a silent DNA-binding partner to an active ligand-binding subunit in mediating retinoid responses through target genes defined by LXRES. LXRES are DR4-type response elements characterized by direct repeats of two similar hexanuclotide half-sites spaced by four nucleotides. Plays an important role in the regulation of cholesterol homeostasis, regulating cholesterol uptake through MYLIP-dependent ubiquitination of LDLR, VLDLR and LRP8. Interplays functionally with RORA for the regulation of genes involved in liver metabolism. Induces LPCAT3-dependent phospholipid remodeling in endoplasmic reticulum (ER) membranes of hepatocytes, driving SREBF1 processing and lipogenesis. Via LPCAT3, triggers the incorporation of arachidonate into phosphatidylcholines of ER membranes, increasing membrane dynamics and enabling triacylglycerols transfer to nascent very low-density lipoprotein (VLDL) particles. Via LPCAT3 also counteracts lipid-induced ER stress response and inflammation, likely by modulating SRC kinase membrane compartmentalization and limiting the synthesis of lipid inflammatory mediators. In Bos taurus (Bovine), this protein is Oxysterols receptor LXR-alpha (NR1H3).